The sequence spans 254 residues: MSNTTMATSTILLFLLAGLAAAHGDGDTTIRLPSDGAKASRPRAAKPWDCCDNIEISRLMIYPPLYRCNDEVKQCAAACKECVEAPGGDFNGGAFVCSDWFSTVDPGPKCTAALDGLSMERPWKCCDNIKRLPTKPDPPQWRCNDELEPSQCTAACKSCREAPGPFPGKLICEDIYWGADPGPLCTPRPWGDCCDKAFCNKMNPPTCRCMDEVKECADACKDCQRVESSEPPRYVCKDRFTGHPGPVCKPRAEN.

Positions 1–22 (MSNTTMATSTILLFLLAGLAAA) are cleaved as a signal peptide. The propeptide occupies 23 to 118 (HGDGDTTIRL…KCTAALDGLS (96 aa)). Repeats lie at residues 46 to 120 (KPWD…LSME), 121 to 187 (RPWK…LCTP), and 188 to 251 (RPWG…CKPR). Intrachain disulfides connect Cys51/Cys248, Cys125/Cys185, Cys126/Cys143, Cys152/Cys159, Cys156/Cys172, Cys193/Cys248, Cys194/Cys209, Cys199/Cys207, Cys216/Cys223, and Cys220/Cys236. A propeptide spanning residues 252 to 254 (AEN) is cleaved from the precursor.

Belongs to the Bowman-Birk serine protease inhibitor family. As to expression, expressed in roots, leaves and flowers.

In Oryza sativa subsp. indica (Rice), this protein is Bowman-Birk type bran trypsin inhibitor (RBBI3.3).